The primary structure comprises 1829 residues: Afadin (1829 aa).

The Ras-associating 1 domain occupies 39-133 (FHGVMRFYFQ…GRFVLKNEND (95 aa)). Residues 129–196 (KNENDAIPAK…PSQGDDSENS (68 aa)) are disordered. Residues 146 to 186 (EKQEKEGVIQNFKRTLSKKEKKEKKKREKEALRQASDKEER) are a coiled coil. Basic residues predominate over residues 160-172 (TLSKKEKKEKKKR). Residues 173-189 (EKEALRQASDKEERPSQ) are compositionally biased toward basic and acidic residues. Phosphoserine occurs at positions 216, 246, and 256. Positions 246–348 (SGGTLRIYAD…LVFQLKRRPP (103 aa)) constitute a Ras-associating 2 domain. Over residues 356 to 371 (KKHVEGKPLKGKDRAD) the composition is skewed to basic and acidic residues. The tract at residues 356–377 (KKHVEGKPLKGKDRADGSGYGS) is disordered. A phosphoserine mark is found at S391 and S424. Residues 441–507 (FGPGIQPHHC…KFVDPIQDHV (67 aa)) form the FHA domain. S512, S557, S562, S589, and S655 each carry phosphoserine. Positions 539–595 (DIHSGTALPASRSTTRLDSDRVSSASSTAERGMVKPMIRLDQEQDYRRRESRTQDAA) are disordered. The segment covering 576-591 (IRLDQEQDYRRRESRT) has biased composition (basic and acidic residues). Positions 668 to 915 (NKMVSMMEGV…IENVVAVAEN (248 aa)) constitute a Dilute domain. The PDZ domain occupies 1014 to 1100 (VITVTLKKQN…VVTLEVAKQG (87 aa)). S1090, S1114, S1133, S1147, S1150, S1179, S1180, S1189, and S1206 each carry phosphoserine. Residues 1114 to 1230 (SPMMQRISDR…PRPEAYPIPT (117 aa)) form a disordered region. Residues 1120–1135 (ISDRRGSGKPRPKSEG) show a composition bias toward basic and acidic residues. Residues 1139–1150 (YNNSAQNGSPES) show a composition bias toward polar residues. A compositionally biased stretch (basic and acidic residues) spans 1159–1179 (SEPKKLPGDDRLMKNRADHRS). Residues 1195 to 1217 (PYTSGTAAKITSVSTGNLCTEEQ) show a composition bias toward polar residues. A phosphothreonine mark is found at T1218 and T1239. A phosphoserine mark is found at S1245 and S1282. Residues 1300-1309 (ESGMDRKCDS) show a composition bias toward basic and acidic residues. 2 disordered regions span residues 1300-1533 (ESGM…EKQQ) and 1574-1724 (RLQE…KTQV). Over residues 1316-1325 (SSSVESSTSS) the composition is skewed to low complexity. Polar residues predominate over residues 1332–1344 (SSKSVTPASTLTK). Position 1335 is a phosphoserine (S1335). T1337 is modified (phosphothreonine). Residues 1371-1380 (LPPPPPPPPA) are compositionally biased toward pro residues. Residues 1401–1412 (NQAAPQSAQVAA) show a composition bias toward low complexity. Residues 1413–1447 (AERKKREEHQRWYEKEKARLEEERERKRREQERKL) show a composition bias toward basic and acidic residues. A coiled-coil region spans residues 1417–1454 (KREEHQRWYEKEKARLEEERERKRREQERKLGQMRTQS). Residues 1450 to 1464 (MRTQSLNPASFSPLA) are compositionally biased toward polar residues. A compositionally biased stretch (basic and acidic residues) spans 1494–1510 (TIERRDLQYITISKEEL). A phosphoserine mark is found at S1506 and S1517. The span at 1520 to 1533 (PWKRDAREKLEKQQ) shows a compositional bias: basic and acidic residues. The stretch at 1530-1564 (EKQQQMHIVDMLSKEIHELQNKGDRTAEESDRLRK) forms a coiled coil. Residues 1583–1594 (EDDDEEEDDDVD) are compositionally biased toward acidic residues. Positions 1600–1672 (QRLEAERRAR…SRLEAERRRQ (73 aa)) form a coiled coil. The span at 1602–1682 (LEAERRARLQ…HEEAARRLLE (81 aa)) shows a compositional bias: basic and acidic residues. At S1701 the chain carries Phosphoserine. Residues 1715–1724 (RNASYLKTQV) are compositionally biased toward polar residues. Residue S1726 is modified to Phosphoserine. Residues 1742 to 1829 (DEEENYVPAG…TELENELNTK (88 aa)) form a disordered region. A compositionally biased stretch (polar residues) spans 1753–1764 (NSYSGSAGTTAG). Basic and acidic residues predominate over residues 1768-1781 (APRDTREKLSRSQD). Phosphoserine occurs at positions 1779 and 1804. Residues 1809–1829 (VSDKVKASRKLTELENELNTK) are compositionally biased toward basic and acidic residues. K1812 carries the post-translational modification N6-acetyllysine.

As to quaternary structure, homodimer. Interacts with F-actin, nectin and NECTIN3. Essential for the association of nectin and E-cadherin. Isoform 2/s-afadin does not interact with F-actin. Interacts with ZO-1 and occludin, but probably in an indirect manner. Interacts with RIT1, RIT2, NRXN1 and BCR. Interacts with ADAM10; the interaction locks ADAM10 at adherens junctions following ADAM10 recruitment to adherens junctions by TSPAN33. Isoform 1 is widely expressed, including in heart, brain, spleen, lung, liver, skeletal muscle, kidney and testis. Isoform 2 is mainly expressed in the brain.

The protein resides in the cell junction. It localises to the adherens junction. Its function is as follows. Belongs to an adhesion system, probably together with the E-cadherin-catenin system, which plays a role in the organization of homotypic, interneuronal and heterotypic cell-cell adherens junctions (AJs). Nectin- and actin-filament-binding protein that connects nectin to the actin cytoskeleton. May play a key role in the organization of epithelial structures of the embryonic ectoderm. Essential for the organization of adherens junctions. This Rattus norvegicus (Rat) protein is Afadin.